The following is a 443-amino-acid chain: Eukaryotic translation initiation factor 3 subunit M (443 aa).

The region spanning 205–375 (GLYQSTGNLA…SLIRIHSISS (171 aa)) is the PCI domain. The interval 413-443 (ETVAQQGLGQQRRGGKRREEKKEKEDKEEQE) is disordered. Over residues 429–443 (RREEKKEKEDKEEQE) the composition is skewed to basic and acidic residues.

It belongs to the eIF-3 subunit M family. Component of the eukaryotic translation initiation factor 3 (eIF-3) complex.

It localises to the cytoplasm. In terms of biological role, component of the eukaryotic translation initiation factor 3 (eIF-3) complex, which is involved in protein synthesis of a specialized repertoire of mRNAs and, together with other initiation factors, stimulates binding of mRNA and methionyl-tRNAi to the 40S ribosome. The eIF-3 complex specifically targets and initiates translation of a subset of mRNAs involved in cell proliferation. In Cryptococcus neoformans var. neoformans serotype D (strain B-3501A) (Filobasidiella neoformans), this protein is Eukaryotic translation initiation factor 3 subunit M.